Reading from the N-terminus, the 342-residue chain is N-acetyl-gamma-glutamyl-phosphate reductase (342 aa).

Cys149 is a catalytic residue.

It belongs to the NAGSA dehydrogenase family. Type 1 subfamily.

Its subcellular location is the cytoplasm. It catalyses the reaction N-acetyl-L-glutamate 5-semialdehyde + phosphate + NADP(+) = N-acetyl-L-glutamyl 5-phosphate + NADPH + H(+). It participates in amino-acid biosynthesis; L-arginine biosynthesis; N(2)-acetyl-L-ornithine from L-glutamate: step 3/4. Its function is as follows. Catalyzes the NADPH-dependent reduction of N-acetyl-5-glutamyl phosphate to yield N-acetyl-L-glutamate 5-semialdehyde. This chain is N-acetyl-gamma-glutamyl-phosphate reductase, found in Jannaschia sp. (strain CCS1).